The following is a 384-amino-acid chain: Magnesium transporter MRS2-I (384 aa).

The next 2 helical transmembrane spans lie at 319-339 (LFLSSGTVCLSLYSLVAGIFG) and 356-376 (WVVLVSGLFCAFMFVSIVAYA). The short motif at 339–341 (GMN) is the Required for magnesium transport activity element.

It belongs to the CorA metal ion transporter (MIT) (TC 1.A.35.5) family.

The protein localises to the membrane. Functionally, magnesium transporter that may mediate the influx of magnesium. This Oryza sativa subsp. japonica (Rice) protein is Magnesium transporter MRS2-I (MRS2-I).